Here is a 3255-residue protein sequence, read N- to C-terminus: Genome polyprotein (3255 aa).

The 146-residue stretch at 292–437 (VMNQQTLMAF…HSITHRMVQY (146 aa)) folds into the Peptidase S30 domain. Residues His-345, Asp-354, and Ser-388 each act as for P1 proteinase activity in the active site. The short motif at 489–492 (KITC) is the Involved in interaction with stylet and aphid transmission element. Residues 747–749 (PTK) carry the Involved in virions binding and aphid transmission motif. The region spanning 773 to 895 (MFVTKDGYCY…ESEMQHYRVG (123 aa)) is the Peptidase C6 domain. Residues Cys-781 and His-854 each act as for helper component proteinase activity in the active site. Positions 1397–1549 (EIAHNEYRDI…PMHMVDIATE (153 aa)) constitute a Helicase ATP-binding domain. An ATP-binding site is contributed by 1410-1417 (GGVGSGKS). The short motif at 1499 to 1502 (DECH) is the DECH box element. Residues 1568–1727 (DATKKGDNIL…GLPVMTSNVS (160 aa)) form the Helicase C-terminal domain. A Nuclear localization signal motif is present at residues 2062–2069 (EKGKKSGK). O-(5'-phospho-RNA)-tyrosine is present on Tyr-2084. In terms of domain architecture, Peptidase C4 spans 2215 to 2433 (SKTLFRGLRD…MVWGGINLIN (219 aa)). Catalysis depends on for nuclear inclusion protein A activity residues His-2260, Asp-2295, and Cys-2365. The RdRp catalytic domain occupies 2699–2823 (WVYCDADGSQ…AIKPEHESLL (125 aa)). Positions 2980 to 3028 (AKLDAGQGSKTDDKQKNSADPKDNIITEKGSGSGQMKKDDDINAGLHGK) are disordered. Basic and acidic residues predominate over residues 2989–3005 (KTDDKQKNSADPKDNII). The residue at position 3237 (Thr-3237) is a Phosphothreonine.

Belongs to the potyviridae genome polyprotein family. Interacts with host eIF4E protein (via cap-binding region); this interaction mediates the translation of the VPg-viral RNA conjugates. Part of a complex that comprises VPg, RNA, host EIF4E and EIF4G; this interaction mediates the translation of the VPg-viral RNA conjugates. VPg is uridylylated by the polymerase and is covalently attached to the 5'-end of the genomic RNA. This uridylylated form acts as a nucleotide-peptide primer for the polymerase. In terms of processing, potyviral RNA is expressed as two polyproteins which undergo post-translational proteolytic processing. Genome polyprotein is processed by NIa-pro, P1 and HC-pro proteinases resulting in the production of at least ten individual proteins. P3N-PIPO polyprotein is cleaved by P1 and HC-pro proteinases resulting in the production of three individual proteins. The P1 proteinase and the HC-pro cleave only their respective C-termini autocatalytically. 6K1 is essential for proper proteolytic separation of P3 from CI.

The protein localises to the host cytoplasmic vesicle. It localises to the host nucleus. The protein resides in the virion. It catalyses the reaction RNA(n) + a ribonucleoside 5'-triphosphate = RNA(n+1) + diphosphate. The catalysed reaction is Hydrolyzes glutaminyl bonds, and activity is further restricted by preferences for the amino acids in P6 - P1' that vary with the species of potyvirus, e.g. Glu-Xaa-Xaa-Tyr-Xaa-Gln-|-(Ser or Gly) for the enzyme from tobacco etch virus. The natural substrate is the viral polyprotein, but other proteins and oligopeptides containing the appropriate consensus sequence are also cleaved.. It carries out the reaction Hydrolyzes a Gly-|-Gly bond at its own C-terminus, commonly in the sequence -Tyr-Xaa-Val-Gly-|-Gly, in the processing of the potyviral polyprotein.. In terms of biological role, required for aphid transmission and also has proteolytic activity. Only cleaves a Gly-Gly dipeptide at its own C-terminus. Interacts with virions and aphid stylets. Acts as a suppressor of RNA-mediated gene silencing, also known as post-transcriptional gene silencing (PTGS), a mechanism of plant viral defense that limits the accumulation of viral RNAs. May have RNA-binding activity. Has helicase activity. It may be involved in replication. Its function is as follows. Indispensable for virus replication. Reduces the abundance of host transcripts related to jasmonic acid biosynthesis therefore altering the host defenses. In order to increase its own stability, decreases host protein degradation pathways. Functionally, indispensable for virus replication. In terms of biological role, mediates the cap-independent, EIF4E-dependent translation of viral genomic RNAs. Binds to the cap-binding site of host EIF4E and thus interferes with the host EIF4E-dependent mRNA export and translation. VPg-RNA directly binds EIF4E and is a template for transcription. Also forms trimeric complexes with EIF4E-EIF4G, which are templates for translation. Has RNA-binding and proteolytic activities. Its function is as follows. An RNA-dependent RNA polymerase that plays an essential role in the virus replication. Functionally, involved in aphid transmission, cell-to-cell and systemis movement, encapsidation of the viral RNA and in the regulation of viral RNA amplification. This chain is Genome polyprotein, found in Lettuce mosaic virus (strain 0 / isolate French) (LMV).